The primary structure comprises 266 residues: Ribosomal RNA small subunit methyltransferase A (266 aa).

S-adenosyl-L-methionine-binding residues include Asn-16, Leu-18, Gly-43, Glu-64, Asp-89, and Asn-110.

Belongs to the class I-like SAM-binding methyltransferase superfamily. rRNA adenine N(6)-methyltransferase family. RsmA subfamily.

It localises to the cytoplasm. The enzyme catalyses adenosine(1518)/adenosine(1519) in 16S rRNA + 4 S-adenosyl-L-methionine = N(6)-dimethyladenosine(1518)/N(6)-dimethyladenosine(1519) in 16S rRNA + 4 S-adenosyl-L-homocysteine + 4 H(+). Functionally, specifically dimethylates two adjacent adenosines (A1518 and A1519) in the loop of a conserved hairpin near the 3'-end of 16S rRNA in the 30S particle. May play a critical role in biogenesis of 30S subunits. This Marinomonas sp. (strain MWYL1) protein is Ribosomal RNA small subunit methyltransferase A.